The primary structure comprises 538 residues: Bifunctional purine biosynthesis protein PurH (538 aa).

The MGS-like domain occupies 8–158 (IPAPDKVKIR…KNHAYVTVVT (151 aa)).

This sequence belongs to the PurH family.

The catalysed reaction is (6R)-10-formyltetrahydrofolate + 5-amino-1-(5-phospho-beta-D-ribosyl)imidazole-4-carboxamide = 5-formamido-1-(5-phospho-D-ribosyl)imidazole-4-carboxamide + (6S)-5,6,7,8-tetrahydrofolate. It carries out the reaction IMP + H2O = 5-formamido-1-(5-phospho-D-ribosyl)imidazole-4-carboxamide. It functions in the pathway purine metabolism; IMP biosynthesis via de novo pathway; 5-formamido-1-(5-phospho-D-ribosyl)imidazole-4-carboxamide from 5-amino-1-(5-phospho-D-ribosyl)imidazole-4-carboxamide (10-formyl THF route): step 1/1. The protein operates within purine metabolism; IMP biosynthesis via de novo pathway; IMP from 5-formamido-1-(5-phospho-D-ribosyl)imidazole-4-carboxamide: step 1/1. The chain is Bifunctional purine biosynthesis protein PurH from Agrobacterium fabrum (strain C58 / ATCC 33970) (Agrobacterium tumefaciens (strain C58)).